Here is a 286-residue protein sequence, read N- to C-terminus: 4-diphosphocytidyl-2-C-methyl-D-erythritol kinase (286 aa).

Lysine 13 is an active-site residue. Proline 99–serine 109 lines the ATP pocket. Residue aspartate 141 is part of the active site.

Belongs to the GHMP kinase family. IspE subfamily.

It carries out the reaction 4-CDP-2-C-methyl-D-erythritol + ATP = 4-CDP-2-C-methyl-D-erythritol 2-phosphate + ADP + H(+). Its pathway is isoprenoid biosynthesis; isopentenyl diphosphate biosynthesis via DXP pathway; isopentenyl diphosphate from 1-deoxy-D-xylulose 5-phosphate: step 3/6. Catalyzes the phosphorylation of the position 2 hydroxy group of 4-diphosphocytidyl-2C-methyl-D-erythritol. This is 4-diphosphocytidyl-2-C-methyl-D-erythritol kinase from Herminiimonas arsenicoxydans.